Consider the following 308-residue polypeptide: MPTLIVLIGPTGVGKTELSLRLAENFHTSIVSADSRQLYAELKIGTAAPTPDQLKRVPHYLVGTLHLTDYYSAAQYEQEAMEILHQLFTEHEVVVLTGGSMMYVDAICKGIDDIPTVDAETRQVMLQKYEEEGLEQLCAELRLLDPDYYRIVDLKNPKRVIHALEICYMTGKTYTSFRTQQKKERPFRILKIGLTRDREELYDRINRRVDQMMEEGLLDEVRSVLSYRHLNSLNTVGYKELFKYLDGEWELPFAIEKIKQNSRIYSRKQMTWFKRDEEIRWFHPEQETEILEYLRLQNLTHLPSLDTF.

An ATP-binding site is contributed by 9-16 (GPTGVGKT). 11–16 (TGVGKT) provides a ligand contact to substrate. Residues 34–37 (DSRQ) form an interaction with substrate tRNA region.

The protein belongs to the IPP transferase family. In terms of assembly, monomer. Mg(2+) is required as a cofactor.

The catalysed reaction is adenosine(37) in tRNA + dimethylallyl diphosphate = N(6)-dimethylallyladenosine(37) in tRNA + diphosphate. Catalyzes the transfer of a dimethylallyl group onto the adenine at position 37 in tRNAs that read codons beginning with uridine, leading to the formation of N6-(dimethylallyl)adenosine (i(6)A). In Bacteroides thetaiotaomicron (strain ATCC 29148 / DSM 2079 / JCM 5827 / CCUG 10774 / NCTC 10582 / VPI-5482 / E50), this protein is tRNA dimethylallyltransferase 1.